We begin with the raw amino-acid sequence, 26 residues long: AKGKNTKKFAAVVDEEGGAVTAXYXF.

This sequence belongs to the Tom7 family. Forms part of the preprotein translocase complex of the outer mitochondrial membrane (TOM complex).

The protein localises to the mitochondrion outer membrane. Its function is as follows. Seems to act as a modulator of the dynamics of the mitochondrial protein transport machinery. Seems to promote the dissociation of subunits of the outer membrane translocase. The chain is Mitochondrial import receptor subunit TOM7-2 (TOM7-2) from Solanum tuberosum (Potato).